A 309-amino-acid polypeptide reads, in one-letter code: Ribonuclease Z (309 aa).

7 residues coordinate Zn(2+): H63, H65, D67, H68, H145, D216, and H274. D67 acts as the Proton acceptor in catalysis.

The protein belongs to the RNase Z family. Homodimer. Zn(2+) serves as cofactor.

The catalysed reaction is Endonucleolytic cleavage of RNA, removing extra 3' nucleotides from tRNA precursor, generating 3' termini of tRNAs. A 3'-hydroxy group is left at the tRNA terminus and a 5'-phosphoryl group is left at the trailer molecule.. Zinc phosphodiesterase, which displays some tRNA 3'-processing endonuclease activity. Probably involved in tRNA maturation, by removing a 3'-trailer from precursor tRNA. The sequence is that of Ribonuclease Z from Streptococcus sanguinis (strain SK36).